The chain runs to 507 residues: ATP synthase subunit alpha, chloroplastic (507 aa).

Residue 170–177 (GDRQTGKT) coordinates ATP. T257 bears the Phosphothreonine mark.

The protein belongs to the ATPase alpha/beta chains family. F-type ATPases have 2 components, CF(1) - the catalytic core - and CF(0) - the membrane proton channel. CF(1) has five subunits: alpha(3), beta(3), gamma(1), delta(1), epsilon(1). CF(0) has four main subunits: a, b, b' and c.

It is found in the plastid. The protein resides in the chloroplast thylakoid membrane. It catalyses the reaction ATP + H2O + 4 H(+)(in) = ADP + phosphate + 5 H(+)(out). Its function is as follows. Produces ATP from ADP in the presence of a proton gradient across the membrane. The alpha chain is a regulatory subunit. The sequence is that of ATP synthase subunit alpha, chloroplastic from Aethionema grandiflorum (Persian stone-cress).